The sequence spans 362 residues: Peptide chain release factor 1 (362 aa).

An N5-methylglutamine modification is found at Gln236.

Belongs to the prokaryotic/mitochondrial release factor family. Methylated by PrmC. Methylation increases the termination efficiency of RF1.

It localises to the cytoplasm. Functionally, peptide chain release factor 1 directs the termination of translation in response to the peptide chain termination codons UAG and UAA. The protein is Peptide chain release factor 1 of Lactobacillus helveticus (strain DPC 4571).